A 249-amino-acid polypeptide reads, in one-letter code: Cell surface glycoprotein CD200 receptor 2 (249 aa).

Residues methionine 1–threonine 24 form the signal peptide. The region spanning isoleucine 25–glutamine 124 is the Ig-like V-type domain. At isoleucine 25–threonine 220 the chain is on the extracellular side. A disulfide bridge links cysteine 38 with cysteine 108. 3 N-linked (GlcNAc...) asparagine glycosylation sites follow: asparagine 73, asparagine 138, and asparagine 171. Residues proline 113–serine 208 form the Ig-like C2-type domain. Cysteine 143 and cysteine 192 are joined by a disulfide. A helical membrane pass occupies residues isoleucine 221 to phenylalanine 241. Residues glutamine 242–threonine 249 are Cytoplasmic-facing.

Belongs to the CD200R family. As to expression, expressed in bone marrow, spleen, brain, lung, testis and thymus.

Its subcellular location is the membrane. Functionally, according to PubMed:15187158 it is a receptor for the CD200 cell surface glycoprotein. According to PubMed:16081818 it is not a receptor for the CD200/OX2 cell surface glycoprotein. Involved in the recruitment or surface expression of the TYROBP receptor. The polypeptide is Cell surface glycoprotein CD200 receptor 2 (Cd200r1l) (Mus musculus (Mouse)).